Reading from the N-terminus, the 898-residue chain is Conserved oligomeric Golgi complex subunit 5 (898 aa).

Positions 1–30 are disordered; sequence MNNNNNNNEGVSSSSSSSSSPLPNISSPNL. Positions 129-192 form a coiled coil; the sequence is DTLKLGVSNL…VKKLKNHLQA (64 aa). Disordered stretches follow at residues 311–339, 519–551, and 679–705; these read NNNNSNNNITTNNNNNNYNNNNNNNNNNN, SNNSNSNSNNSIESSLSTSSSSSSSSSSSSSTT, and STGGVNNNSNSNNNNEIITINENSKPT. Residues 679–702 are compositionally biased toward low complexity; the sequence is STGGVNNNSNSNNNNEIITINENS.

The protein resides in the golgi apparatus membrane. This Dictyostelium discoideum (Social amoeba) protein is Conserved oligomeric Golgi complex subunit 5 (cog5).